Reading from the N-terminus, the 329-residue chain is Biotin synthase (329 aa).

The Radical SAM core domain maps to 38–262 (NTIQVSTLLS…IMPHSYIRLS (225 aa)). [4Fe-4S] cluster is bound by residues Cys-53, Cys-57, and Cys-60. Cys-97, Cys-128, Cys-188, and Arg-260 together coordinate [2Fe-2S] cluster.

This sequence belongs to the radical SAM superfamily. Biotin synthase family. Homodimer. [4Fe-4S] cluster serves as cofactor. It depends on [2Fe-2S] cluster as a cofactor.

The enzyme catalyses (4R,5S)-dethiobiotin + (sulfur carrier)-SH + 2 reduced [2Fe-2S]-[ferredoxin] + 2 S-adenosyl-L-methionine = (sulfur carrier)-H + biotin + 2 5'-deoxyadenosine + 2 L-methionine + 2 oxidized [2Fe-2S]-[ferredoxin]. It functions in the pathway cofactor biosynthesis; biotin biosynthesis; biotin from 7,8-diaminononanoate: step 2/2. Catalyzes the conversion of dethiobiotin (DTB) to biotin by the insertion of a sulfur atom into dethiobiotin via a radical-based mechanism. This chain is Biotin synthase, found in Acinetobacter baumannii (strain SDF).